We begin with the raw amino-acid sequence, 345 residues long: uncharacterized protein (345 aa).

Belongs to the cycloisomerase 2 family.

This is an uncharacterized protein from Staphylococcus saprophyticus subsp. saprophyticus (strain ATCC 15305 / DSM 20229 / NCIMB 8711 / NCTC 7292 / S-41).